We begin with the raw amino-acid sequence, 485 residues long: Glutamate--tRNA ligase 2 (485 aa).

Positions 10–20 (PSPTGPIHIGN) match the 'HIGH' region motif. The short motif at 252–256 (KLSKR) is the 'KMSKS' region element. Residue Lys-255 coordinates ATP.

This sequence belongs to the class-I aminoacyl-tRNA synthetase family. Glutamate--tRNA ligase type 1 subfamily. In terms of assembly, monomer.

The protein resides in the cytoplasm. The catalysed reaction is tRNA(Glu) + L-glutamate + ATP = L-glutamyl-tRNA(Glu) + AMP + diphosphate. Its function is as follows. Catalyzes the attachment of glutamate to tRNA(Glu) in a two-step reaction: glutamate is first activated by ATP to form Glu-AMP and then transferred to the acceptor end of tRNA(Glu). The polypeptide is Glutamate--tRNA ligase 2 (Caldanaerobacter subterraneus subsp. tengcongensis (strain DSM 15242 / JCM 11007 / NBRC 100824 / MB4) (Thermoanaerobacter tengcongensis)).